The primary structure comprises 415 residues: Tyrosine--tRNA ligase (415 aa).

Tyr34 contributes to the L-tyrosine binding site. The 'HIGH' region signature appears at Pro39–His48. 2 residues coordinate L-tyrosine: Tyr164 and Gln168. Positions Lys225–Ser229 match the 'KMSKS' region motif. Lys228 is an ATP binding site. The S4 RNA-binding domain maps to Ile348–Leu414.

Belongs to the class-I aminoacyl-tRNA synthetase family. TyrS type 1 subfamily. As to quaternary structure, homodimer.

The protein localises to the cytoplasm. The catalysed reaction is tRNA(Tyr) + L-tyrosine + ATP = L-tyrosyl-tRNA(Tyr) + AMP + diphosphate + H(+). Catalyzes the attachment of tyrosine to tRNA(Tyr) in a two-step reaction: tyrosine is first activated by ATP to form Tyr-AMP and then transferred to the acceptor end of tRNA(Tyr). The chain is Tyrosine--tRNA ligase from Phytoplasma australiense.